We begin with the raw amino-acid sequence, 53 residues long: uncharacterized protein (53 aa).

The next 2 helical transmembrane spans lie at 3 to 22 (LFGM…GVLL) and 26 to 45 (AFFF…FTVL).

The protein localises to the cell membrane. This is an uncharacterized protein from Bacillus subtilis (strain 168).